A 951-amino-acid chain; its full sequence is Plasma membrane ATPase (951 aa).

Transmembrane regions (helical) follow at residues 61–81 (FLGFMWNPLSWVMEMAAIMAI), 93–113 (WEDFVGIIVLLVINSTISFIE), 243–263 (IGNFCICSIAVGIVIEIIVMF), and 277–297 (LLVLLIGGIPIAMPTVLSVTM). The 4-aspartylphosphate intermediate role is filled by D329. Positions 588 and 592 each coordinate Mg(2+). 6 helical membrane passes run 647-667 (IYAVSITIRIVLGFLLIALIW), 671-691 (FSPFMVLIIAILNDGTIMTIS), 709-729 (IFATGIVLGSYLALMTVIFFW), 752-772 (EMMSALYLQVSIVSQALIFVT), 785-805 (LLLVTAFMLAQLVATFLAVYA), and 814-834 (GIGWGWAGVIWLYSIVFYFPL).

The protein belongs to the cation transport ATPase (P-type) (TC 3.A.3) family. Type IIIA subfamily.

The protein resides in the cell membrane. It carries out the reaction ATP + H2O + H(+)(in) = ADP + phosphate + 2 H(+)(out). In terms of biological role, the plasma membrane ATPase of plants and fungi is a hydrogen ion pump. The proton gradient it generates drives the active transport of nutrients by H(+)-symport. The resulting external acidification and/or internal alkinization may mediate growth responses. The protein is Plasma membrane ATPase of Oryza sativa subsp. japonica (Rice).